The chain runs to 174 residues: Glutaredoxin-C5, chloroplastic (174 aa).

The N-terminal 51 residues, 1-51 (MAVTAFNTLKLVSSSLDPIPSVSCSSYSFSLIYVGSPYKRCLKQSCSVRAM), are a transit peptide targeting the chloroplast. Threonine 52 is subject to N-acetylthreonine. Cysteine 90 carries the S-glutathionyl cysteine; partial modification. A disulfide bridge connects residues cysteine 90 and cysteine 93. A Glutaredoxin domain is found at 93 to 171 (CTEVKTLFKR…LMLAEANGKN (79 aa)). 3 residues coordinate glutathione: valine 135, cysteine 148, and threonine 149. An S-glutathionyl cysteine; partial modification is found at cysteine 148.

This sequence belongs to the glutaredoxin family. CPYC subfamily. As to quaternary structure, monomeric apoprotein and homodimeric holoprotein containing a [2Fe-2S] cluster. No in vitro interactions with SUFE1, BOLA1, BOLA2 or BOLA4. Post-translationally, glutathionylated.

The protein localises to the plastid. It localises to the chloroplast. Has a glutathione-disulfide oxidoreductase activity in the presence of NADPH and glutathione reductase. Reduces low molecular weight disulfides and proteins. Can assemble a [2Fe-2S] cluster, but cannot transfer it to an apoferredoxin. The polypeptide is Glutaredoxin-C5, chloroplastic (Arabidopsis thaliana (Mouse-ear cress)).